The sequence spans 410 residues: D-amino acid dehydrogenase (410 aa).

9–14 is a binding site for FAD; sequence GGGIVG.

The protein belongs to the DadA oxidoreductase family. Requires FAD as cofactor.

The protein localises to the cell inner membrane. The enzyme catalyses a D-alpha-amino acid + a quinone + H2O = a 2-oxocarboxylate + a quinol + NH4(+). Catalyzes the oxidative deamination of D-amino acids. Has broad substrate specificity; is mostly active on D-proline, and to a lesser extent, on several other D-amino acids such as D-alanine, D-phenylalanine and D-serine. Mediates electron transport from D-proline to coenzyme Q1 in vitro, and is involved in the electron transport chain from D-proline to the c-type cytochrome in vivo. This chain is D-amino acid dehydrogenase, found in Helicobacter pylori (strain J99 / ATCC 700824) (Campylobacter pylori J99).